The sequence spans 514 residues: Double-stranded RNA-binding protein 6 (514 aa).

DRBM domains lie at 1-70 and 87-155; these read MYKN…ALAR and VYKN…SLRQ. 2 disordered regions span residues 195 to 268 and 455 to 496; these read NNPH…SRFP and EASQ…KDDH. Polar residues-rich tracts occupy residues 216–225, 249–263, and 473–484; these read FPQSSHSSYS, AASQTPFRPTESPNP, and SPDSLPKTQLKT.

Functionally, binds double-stranded RNA. This chain is Double-stranded RNA-binding protein 6 (DRB6), found in Oryza sativa subsp. japonica (Rice).